The following is a 226-amino-acid chain: Peroxynitrite isomerase 2 (226 aa).

A GXWXGXG motif is present at residues 73 to 79; that stretch reads GVWRGEG. 2 residues coordinate heme b: Lys-189 and His-216.

This sequence belongs to the nitrobindin family. In terms of assembly, homodimer. It depends on heme b as a cofactor.

The catalysed reaction is peroxynitrite = nitrate. Its pathway is nitrogen metabolism. Its function is as follows. Heme-binding protein able to scavenge peroxynitrite and to protect free L-tyrosine against peroxynitrite-mediated nitration, by acting as a peroxynitrite isomerase that converts peroxynitrite to nitrate. Therefore, this protein likely plays a role in peroxynitrite sensing and in the detoxification of reactive nitrogen and oxygen species (RNS and ROS, respectively). Is able to bind nitric oxide (NO) in vitro, but may act as a sensor of peroxynitrite levels in vivo. This is Peroxynitrite isomerase 2 from Mycobacterium bovis (strain ATCC BAA-935 / AF2122/97).